Reading from the N-terminus, the 172-residue chain is Neuropeptide-like protein nlp-8 (172 aa).

The first 26 residues, 1 to 26 (MSQKLLPISPLQLLFLQCLLIGFTAA), serve as a signal peptide directing secretion.

Post-translationally, may be processed by convertase egl-3.

Its subcellular location is the secreted. Functionally, neuropeptide-like protein. Plays a role in behaviors associated with a sleep-like state induced by stress (SIS), acting in concert with the FARP (FMRFamide related) peptides, flp-13 and flp-24. The polypeptide is Neuropeptide-like protein nlp-8 (Caenorhabditis elegans).